The sequence spans 328 residues: Tyrosine--tRNA ligase (328 aa).

Residue Tyr33 coordinates L-tyrosine. Residues 38–46 (PSGVLHIGH) carry the 'HIGH' region motif. Tyr154, Gln158, Asp161, and Gln176 together coordinate L-tyrosine. Residues 193–227 (EPPTSLHTPLIADLGTGRGKMSSSEGVTISMEDSR) form a disordered region. The 'KMSKS' region signature appears at 212-216 (KMSSS). ATP is bound at residue Ser215.

This sequence belongs to the class-I aminoacyl-tRNA synthetase family. TyrS type 3 subfamily. As to quaternary structure, homodimer.

It localises to the cytoplasm. The catalysed reaction is tRNA(Tyr) + L-tyrosine + ATP = L-tyrosyl-tRNA(Tyr) + AMP + diphosphate + H(+). Functionally, catalyzes the attachment of tyrosine to tRNA(Tyr) in a two-step reaction: tyrosine is first activated by ATP to form Tyr-AMP and then transferred to the acceptor end of tRNA(Tyr). This Halorubrum lacusprofundi (strain ATCC 49239 / DSM 5036 / JCM 8891 / ACAM 34) protein is Tyrosine--tRNA ligase.